The following is a 228-amino-acid chain: MIKLVLVDLDGTLTEDRESTRIDLDAIYAIRLLQKSGIKVSLVSGNSYPILRGLYTYLYLDGGFVAENGCIVFYKEKYRMCRQMEQSLVDEFKSLFKLRDTWQNEYRECDFGFVPAKITDEMINWAKERNLYIKSSGYAVHIAYNPAGKRIGVEKLLQLLGLKKEDVAAIGDSSTDIELFQQVGFKVAVGNADDELKDIADYITSNKSGKGVREFVDKLLKGEFDGIK.

The active-site Nucleophile is Asp8. Residues Asp8 and Asp10 each contribute to the Mg(2+) site. Lys149 serves as a coordination point for substrate. Asp172 and Asp176 together coordinate Mg(2+).

Belongs to the archaeal SPP-like hydrolase family. It depends on Mg(2+) as a cofactor.

It carries out the reaction 2-phosphoglycolate + H2O = glycolate + phosphate. In terms of biological role, catalyzes the dephosphorylation of 2-phosphoglycolate. In Saccharolobus solfataricus (strain ATCC 35092 / DSM 1617 / JCM 11322 / P2) (Sulfolobus solfataricus), this protein is Phosphoglycolate phosphatase 1.